The chain runs to 311 residues: Methionyl-tRNA formyltransferase (311 aa).

112 to 115 contributes to the (6S)-5,6,7,8-tetrahydrofolate binding site; the sequence is SLLP.

The protein belongs to the Fmt family.

It carries out the reaction L-methionyl-tRNA(fMet) + (6R)-10-formyltetrahydrofolate = N-formyl-L-methionyl-tRNA(fMet) + (6S)-5,6,7,8-tetrahydrofolate + H(+). Functionally, attaches a formyl group to the free amino group of methionyl-tRNA(fMet). The formyl group appears to play a dual role in the initiator identity of N-formylmethionyl-tRNA by promoting its recognition by IF2 and preventing the misappropriation of this tRNA by the elongation apparatus. The chain is Methionyl-tRNA formyltransferase from Rhizobium meliloti (strain 1021) (Ensifer meliloti).